Here is a 477-residue protein sequence, read N- to C-terminus: P3 protein (477 aa).

The tract at residues 1 to 21 (MVLMQDKGSSQQWPGLGGEGG) is disordered. A run of 8 helical transmembrane segments spans residues 225–245 (PMLL…FLMA), 253–273 (ALAL…SYLF), 281–301 (VTLA…FLPL), 320–340 (ISKI…GVLI), 361–381 (VLLL…LAGI), 383–403 (LPIV…GYCL), 417–437 (VSIE…QLSL), and 450–470 (FIVA…HFIY).

This sequence belongs to the bile acid:sodium symporter (BASS) (TC 2.A.28) family.

Its subcellular location is the membrane. In terms of biological role, the ubiquitous expression and the conservation of the sequence in distant animal species suggest that the gene codes for a protein with housekeeping functions. The chain is P3 protein (SLC10A3) from Homo sapiens (Human).